The following is a 197-amino-acid chain: MNLTQLVLASHNGGKLKELQAMLGGSVTLRSVSEFSLVEPEETGLSFVENAILKARNASRLSGLPALADDSGLAVDFLGGAPGIYSARYADGQGDAANNAKLLEALKDVPDEQRGAQFVCVLALVRHADDPLPILCEGLWHGRILHAASGEYGFGYDPLFWVPERNCSSAELGPSEKNQLSHRARAMVLLRQRLGLQ.

Position 10–15 (10–15) interacts with substrate; sequence SHNGGK. Positions 41 and 70 each coordinate Mg(2+). Residue Asp-70 is the Proton acceptor of the active site. Substrate contacts are provided by residues Ser-71, 154-157, Lys-177, and 182-183; these read FGYD and HR.

It belongs to the HAM1 NTPase family. As to quaternary structure, homodimer. Requires Mg(2+) as cofactor.

The enzyme catalyses XTP + H2O = XMP + diphosphate + H(+). It catalyses the reaction dITP + H2O = dIMP + diphosphate + H(+). It carries out the reaction ITP + H2O = IMP + diphosphate + H(+). In terms of biological role, pyrophosphatase that catalyzes the hydrolysis of nucleoside triphosphates to their monophosphate derivatives, with a high preference for the non-canonical purine nucleotides XTP (xanthosine triphosphate), dITP (deoxyinosine triphosphate) and ITP. Seems to function as a house-cleaning enzyme that removes non-canonical purine nucleotides from the nucleotide pool, thus preventing their incorporation into DNA/RNA and avoiding chromosomal lesions. The sequence is that of dITP/XTP pyrophosphatase from Pseudomonas syringae pv. tomato (strain ATCC BAA-871 / DC3000).